The sequence spans 353 residues: tRNA-specific 2-thiouridylase MnmA 2 (353 aa).

Residue 6-13 (LLSGGVDS) participates in ATP binding. The interaction with target base in tRNA stretch occupies residues 92–94 (NPD). Cys97 acts as the Nucleophile in catalysis. An intrachain disulfide couples Cys97 to Cys192. Gly120 serves as a coordination point for ATP. Positions 142–144 (KDQ) are interaction with tRNA. Cys192 functions as the Cysteine persulfide intermediate in the catalytic mechanism.

The protein belongs to the MnmA/TRMU family.

The protein localises to the cytoplasm. It carries out the reaction S-sulfanyl-L-cysteinyl-[protein] + uridine(34) in tRNA + AH2 + ATP = 2-thiouridine(34) in tRNA + L-cysteinyl-[protein] + A + AMP + diphosphate + H(+). Functionally, catalyzes the 2-thiolation of uridine at the wobble position (U34) of tRNA, leading to the formation of s(2)U34. The protein is tRNA-specific 2-thiouridylase MnmA 2 of Bacteroides fragilis (strain YCH46).